A 355-amino-acid polypeptide reads, in one-letter code: Probable dual-specificity RNA methyltransferase RlmN 1 (355 aa).

Glutamate 91 (proton acceptor) is an active-site residue. The Radical SAM core domain maps to 99 to 336; that stretch reads RADRAAGCLS…THLRRSRGPD (238 aa). Cysteine 106 and cysteine 341 are joined by a disulfide. [4Fe-4S] cluster-binding residues include cysteine 113, cysteine 117, and cysteine 120. Residues 163–164, serine 195, 218–220, and asparagine 294 each bind S-adenosyl-L-methionine; these read GE and SLH. Residue cysteine 341 is the S-methylcysteine intermediate of the active site.

The protein belongs to the radical SAM superfamily. RlmN family. The cofactor is [4Fe-4S] cluster.

It is found in the cytoplasm. It carries out the reaction adenosine(2503) in 23S rRNA + 2 reduced [2Fe-2S]-[ferredoxin] + 2 S-adenosyl-L-methionine = 2-methyladenosine(2503) in 23S rRNA + 5'-deoxyadenosine + L-methionine + 2 oxidized [2Fe-2S]-[ferredoxin] + S-adenosyl-L-homocysteine. The catalysed reaction is adenosine(37) in tRNA + 2 reduced [2Fe-2S]-[ferredoxin] + 2 S-adenosyl-L-methionine = 2-methyladenosine(37) in tRNA + 5'-deoxyadenosine + L-methionine + 2 oxidized [2Fe-2S]-[ferredoxin] + S-adenosyl-L-homocysteine. Specifically methylates position 2 of adenine 2503 in 23S rRNA and position 2 of adenine 37 in tRNAs. The chain is Probable dual-specificity RNA methyltransferase RlmN 1 from Opitutus terrae (strain DSM 11246 / JCM 15787 / PB90-1).